Reading from the N-terminus, the 217-residue chain is Somatotropin (217 aa).

The N-terminal stretch at 1–26 (MATGSRTSLLLAFGLLCLPWLQEGSA) is a signal peptide. His-44 serves as a coordination point for Zn(2+). Cys-79 and Cys-191 form a disulfide bridge. Ser-132 bears the Phosphoserine mark. The residue at position 163 (Gln-163) is a Deamidated glutamine; by deterioration. A Phosphoserine modification is found at Ser-176. The residue at position 178 (Asn-178) is a Deamidated asparagine; by deterioration. Position 200 (Glu-200) interacts with Zn(2+). A disulfide bond links Cys-208 and Cys-215.

This sequence belongs to the somatotropin/prolactin family. In terms of assembly, monomer, dimer, trimer, tetramer and pentamer, disulfide-linked or non-covalently associated, in homomeric and heteromeric combinations. Can also form a complex either with GHBP or with the alpha2-macroglobulin complex.

The protein localises to the secreted. Functionally, plays an important role in growth control. Its major role in stimulating body growth is to stimulate the liver and other tissues to secrete IGF1. It stimulates both the differentiation and proliferation of myoblasts. It also stimulates amino acid uptake and protein synthesis in muscle and other tissues. The sequence is that of Somatotropin (GH1) from Homo sapiens (Human).